The sequence spans 414 residues: MTNQIPPSLAENQSKLKQSFVGLQMLFVAFGALVLVPLITGLDSNTALLTAGVGTLLFQFCTGKQVPIFLASSFAFIAPIQYGVQTWGIATTMGGLAFTGLVYFALSTLVKLRGAEALQRFFPPVVVGPVIIIIGMGLAPIAVDMSLGKNSAYAYNDAVLVSMVTLLTTLSVAVFAKGLMKLIPIMFGITAGYILCLFLGLINFQPVIDAPWFSLPKLTTPEFNLEAILYMLPIAIAPAVEHVGGIMAISSVTGKDFLKKPGLHRTLLGDGIATAAASLVGGPPNTTYAEVTGAVMLTRNFNPNIMTWAAVWAIAISFCGKVGAFLSTIPTIVMGGIMMLVFGSIAVVGMSTLIRGKVDVTEARNLCIISVVMTFGIGNMFVDVGNVSLKGISLCAIVAIILNLVLPKAKNEVE.

At 1-14 the chain is on the cytoplasmic side; sequence MTNQIPPSLAENQS. The helical transmembrane segment at 15–38 threads the bilayer; the sequence is KLKQSFVGLQMLFVAFGALVLVPL. Residues 39-42 are Periplasmic-facing; that stretch reads ITGL. The helical transmembrane segment at 43–62 threads the bilayer; the sequence is DSNTALLTAGVGTLLFQFCT. The Cytoplasmic portion of the chain corresponds to 63–65; the sequence is GKQ. The discontinuously helical transmembrane segment at 66–82 threads the bilayer; the sequence is VPIFLASSFAFIAPIQY. Phe74 contacts uracil. Residues 83–91 are Periplasmic-facing; sequence GVQTWGIAT. Residues 92–112 form a helical membrane-spanning segment; sequence TMGGLAFTGLVYFALSTLVKL. The Cytoplasmic portion of the chain corresponds to 113-124; it reads RGAEALQRFFPP. The helical transmembrane segment at 125–146 threads the bilayer; sequence VVVGPVIIIIGMGLAPIAVDMS. The Periplasmic portion of the chain corresponds to 147–155; that stretch reads LGKNSAYAY. The chain crosses the membrane as a helical span at residues 156-171; that stretch reads NDAVLVSMVTLLTTLS. The Cytoplasmic portion of the chain corresponds to 172–178; that stretch reads VAVFAKG. Residues 179–199 form a helical membrane-spanning segment; sequence LMKLIPIMFGITAGYILCLFL. The Periplasmic segment spans residues 200–224; sequence GLINFQPVIDAPWFSLPKLTTPEFN. Residues 225 to 248 form a helical membrane-spanning segment; sequence LEAILYMLPIAIAPAVEHVGGIMA. Glu241 provides a ligand contact to uracil. The Cytoplasmic segment spans residues 249-261; it reads ISSVTGKDFLKKP. A helical transmembrane segment spans residues 262 to 281; that stretch reads GLHRTLLGDGIATAAASLVG. The discontinuously helical transmembrane segment at 282–298 threads the bilayer; sequence GPPNTTYAEVTGAVMLT. Glu290 is a uracil binding site. Over 299 to 301 the chain is Cytoplasmic; it reads RNF. Residues 302 to 319 traverse the membrane as a helical segment; it reads NPNIMTWAAVWAIAISFC. Residues 320–332 are Periplasmic-facing; it reads GKVGAFLSTIPTI. The chain crosses the membrane as a helical span at residues 333-354; sequence VMGGIMMLVFGSIAVVGMSTLI. Residues 355 to 365 lie on the Cytoplasmic side of the membrane; the sequence is RGKVDVTEARN. An intramembrane region (discontinuously helical) is located at residues 366-401; it reads LCIISVVMTFGIGNMFVDVGNVSLKGISLCAIVAII. Residues 402-414 are Cytoplasmic-facing; the sequence is LNLVLPKAKNEVE.

The protein belongs to the nucleobase:cation symporter-2 (NCS2) (TC 2.A.40) family.

The protein localises to the cell inner membrane. The enzyme catalyses uracil(in) + H(+)(in) = uracil(out) + H(+)(out). Functionally, transport of uracil in the cell. This is Probable uracil permease (uraA) from Haemophilus influenzae (strain ATCC 51907 / DSM 11121 / KW20 / Rd).